We begin with the raw amino-acid sequence, 705 residues long: Elongation factor G (705 aa).

In terms of domain architecture, tr-type G spans D8–L294. Residues A17 to T24, D92 to H96, and N146 to D149 each bind GTP.

Belongs to the TRAFAC class translation factor GTPase superfamily. Classic translation factor GTPase family. EF-G/EF-2 subfamily.

It is found in the cytoplasm. Functionally, catalyzes the GTP-dependent ribosomal translocation step during translation elongation. During this step, the ribosome changes from the pre-translocational (PRE) to the post-translocational (POST) state as the newly formed A-site-bound peptidyl-tRNA and P-site-bound deacylated tRNA move to the P and E sites, respectively. Catalyzes the coordinated movement of the two tRNA molecules, the mRNA and conformational changes in the ribosome. The chain is Elongation factor G from Dinoroseobacter shibae (strain DSM 16493 / NCIMB 14021 / DFL 12).